We begin with the raw amino-acid sequence, 1219 residues long: Polyamine-transporting ATPase 13A3 (1219 aa).

At 1 to 28 (MDKEERKTINKGQEDEMEIHGYNLCRWK) the chain is on the cytoplasmic side. The stretch at 29 to 49 (LAMVFVGVICTGGFLLLLLYW) is an intramembrane region. Residues 50–201 (LPEWRVKATC…IAVKVPSVFK (152 aa)) lie on the Cytoplasmic side of the membrane. Residues 202–222 (LLIKEVLNPFYIFQLFSVILW) traverse the membrane as a helical segment. Residues 223 to 228 (SVDEYY) lie on the Lumenal side of the membrane. Residues 229-249 (YYALAIVIMSVVSIISSLYSI) form a helical membrane-spanning segment. Residues 250 to 405 (RKQYVMLHDM…KPTDFKLYRD (156 aa)) lie on the Cytoplasmic side of the membrane. The helical transmembrane segment at 406 to 426 (AYLFLLCLVVVAGIGFIYTII) threads the bilayer. The Lumenal segment spans residues 427 to 444 (NSILNEKEVQEIIIKSLD). Residues 445-465 (IITITVPPALPAAMTAGIVYA) traverse the membrane as a helical segment. Over 466–936 (QRRLKKVGIF…ALMTSFCVFK (471 aa)) the chain is Cytoplasmic. Asp-494 serves as the catalytic 4-aspartylphosphate intermediate. Asp-494 and Thr-496 together coordinate Mg(2+). Residues 494-496 (DKT), Phe-624, Arg-680, and Asp-746 contribute to the ATP site. A Phosphoserine modification is found at Ser-813. Mg(2+)-binding residues include Asp-879 and Asp-883. 879–883 (DGAND) serves as a coordination point for ATP. A helical membrane pass occupies residues 937–957 (FMALYSIIQYFSVTLLYSILS). Residue Asn-958 is a topological domain, lumenal. Residues 959–979 (LGDFQFLFIDLAIILVVVFTM) form a helical membrane-spanning segment. Residues 980-995 (SLNPAWKELVAQRPPS) are Cytoplasmic-facing. The helical transmembrane segment at 996 to 1016 (GLISGALLFSVLSQIVISVGF) threads the bilayer. The Lumenal portion of the chain corresponds to 1017–1066 (QSLGFFWVKQYKVCDPNSDVCNTTRSACWNSSHLYNGTELDSCKIQNYEN). A helical membrane pass occupies residues 1067-1087 (TTVFFISSFQYLTVAVAFSKG). The Cytoplasmic segment spans residues 1088–1098 (KPFRQPCYKNY). The chain crosses the membrane as a helical span at residues 1099–1119 (FFVISVIILYVFILFIMLHPV). The Lumenal portion of the chain corresponds to 1120-1136 (ASVDQVLEIMCVPYQWR). A helical membrane pass occupies residues 1137–1157 (IYMLIIVLINAFVSITVEESV). Over 1158–1219 (DRWGKCCLSW…NGSCQIITIA (62 aa)) the chain is Cytoplasmic.

Belongs to the cation transport ATPase (P-type) (TC 3.A.3) family. Type V subfamily. As to expression, expression is greatest in liver, followed by kidney, colon, stomach, brain and small intestine. Isoform 1 is highly expressed in the kidney while isoform 2 is highly expressed in the brain.

It localises to the recycling endosome membrane. The protein localises to the early endosome membrane. Its subcellular location is the late endosome membrane. It carries out the reaction putrescine(out) + ATP + H2O = putrescine(in) + ADP + phosphate + H(+). Its function is as follows. ATP-driven pump involved in endocytosis-dependent polyamine transport. Uses ATP as an energy source to transfer polyamine precursor putrescine from the endosomal compartment to the cytosol. The polypeptide is Polyamine-transporting ATPase 13A3 (Mus musculus (Mouse)).